Reading from the N-terminus, the 193-residue chain is Non-canonical purine NTP pyrophosphatase homolog (193 aa).

It belongs to the HAM1 NTPase family.

The sequence is that of Non-canonical purine NTP pyrophosphatase homolog from Halalkalibacterium halodurans (strain ATCC BAA-125 / DSM 18197 / FERM 7344 / JCM 9153 / C-125) (Bacillus halodurans).